Reading from the N-terminus, the 642-residue chain is Threonine--tRNA ligase (642 aa).

In terms of domain architecture, TGS spans 1 to 61 (MPVITLPDGS…DTDSELSIIT (61 aa)). Positions 243-534 (DHRKIGKQLD…LIEEYAGKFP (292 aa)) are catalytic. Zn(2+) is bound by residues cysteine 334, histidine 385, and histidine 511.

It belongs to the class-II aminoacyl-tRNA synthetase family. Homodimer. It depends on Zn(2+) as a cofactor.

The protein resides in the cytoplasm. The catalysed reaction is tRNA(Thr) + L-threonine + ATP = L-threonyl-tRNA(Thr) + AMP + diphosphate + H(+). Functionally, catalyzes the attachment of threonine to tRNA(Thr) in a two-step reaction: L-threonine is first activated by ATP to form Thr-AMP and then transferred to the acceptor end of tRNA(Thr). Also edits incorrectly charged L-seryl-tRNA(Thr). This is Threonine--tRNA ligase from Shewanella piezotolerans (strain WP3 / JCM 13877).